A 798-amino-acid polypeptide reads, in one-letter code: Translation initiation factor IF-2 (798 aa).

The disordered stretch occupies residues serine 40–proline 207. Residues asparagine 57 to asparagine 186 show a composition bias toward low complexity. Over residues arginine 187 to lysine 196 the composition is skewed to basic residues. In terms of domain architecture, tr-type G spans threonine 300–lysine 469. A G1 region spans residues glycine 309–threonine 316. Glycine 309–threonine 316 lines the GTP pocket. Residues glycine 334–histidine 338 form a G2 region. The segment at aspartate 355–glycine 358 is G3. GTP contacts are provided by residues aspartate 355–histidine 359 and asparagine 409–aspartate 412. Residues asparagine 409–aspartate 412 form a G4 region. The tract at residues serine 445–lysine 447 is G5.

This sequence belongs to the TRAFAC class translation factor GTPase superfamily. Classic translation factor GTPase family. IF-2 subfamily.

It is found in the cytoplasm. In terms of biological role, one of the essential components for the initiation of protein synthesis. Protects formylmethionyl-tRNA from spontaneous hydrolysis and promotes its binding to the 30S ribosomal subunits. Also involved in the hydrolysis of GTP during the formation of the 70S ribosomal complex. The protein is Translation initiation factor IF-2 of Enterococcus faecalis (strain ATCC 700802 / V583).